The sequence spans 115 residues: Putative septation protein SpoVG (115 aa).

A disordered region spans residues Pro88–Ala115. A compositionally biased stretch (polar residues) spans Ile91 to Leu100. Basic and acidic residues predominate over residues Ser105–Ala115.

The protein belongs to the SpoVG family.

Could be involved in septation. The chain is Putative septation protein SpoVG from Macrococcus caseolyticus (strain JCSC5402) (Macrococcoides caseolyticum).